Here is a 289-residue protein sequence, read N- to C-terminus: Protein charybde (289 aa).

The tract at residues 119 to 142 (TAHHPGHGHGPGPSPMPASPLQST) is disordered.

This sequence belongs to the DDIT4 family.

It localises to the cytoplasm. Functionally, inhibits cell growth by regulating the Tor pathway upstream of the Tsc1-Tsc2 complex and downstream of Akt1. Acts as a cell death activator during head development. The protein is Protein charybde (chrb) of Drosophila pseudoobscura pseudoobscura (Fruit fly).